The chain runs to 596 residues: MTKAYNIIHHKFDVVVVGAGGAGLRSAFGMAKEGLNTACITKLFPTRSHTVAAQGGISAALGNMGEDDWRWHMYDTVKGSDWLGDQDAIEYMCKNAPDAILELEHYGVPFSRTEEGKIYQRPFGGMTTEYGKGKAAQRTCAAADRTGHAILHTLYQQSLKHKVQFFVEYFAIDLLMEDGECRGVVVWNLDDGTLHCFRAHNVVLATGGYGRAYFSATSAHTCTGDGGGMAIRAGLPLQDMEFVQFHPTGIYSAGCLITEGARGEGGYLVNANGERFMERYAPAAKDLASRDVVSRAMTIEIREGRGVGEHKDHVFLHLNHLSPEILHSRLPGISETAKIFAGVDVTKEPIPVLPTVHYNMGGIPTNYHGQVIIKDGTNHNSVVKGLMAIGEAACVSVHGANRLGSNSLLDLVVFGRSSALKAAELISPASPHKPIKEASLEKIINRFDKVRHANGNILVADLRLKMQRTMQSHASVFRTQEVLDEGAGMISEIRNGYKDIKINDKSLIWNSDLVEALELDNLLDQALVTVYSAAARKESRGAHAREDYPDRNDGDWMKHTLSSIDEAGKIVIDYKPVTLTTLTDEISAIPPAKRVY.

Residues 18–23 (GAGGAG), 41–56 (TKLF…AQGG), and D225 contribute to the FAD site. H49 carries the tele-8alpha-FAD histidine modification. H246 and T258 together coordinate substrate. R290 acts as the Proton acceptor in catalysis. H357 provides a ligand contact to substrate. E391 lines the FAD pocket. R402 contacts substrate. 407-408 (SL) serves as a coordination point for FAD.

Belongs to the FAD-dependent oxidoreductase 2 family. FRD/SDH subfamily. As to quaternary structure, part of an enzyme complex containing four subunits: a flavoprotein, an iron-sulfur, cytochrome b-556, and a hydrophobic anchor protein. FAD serves as cofactor.

The protein localises to the cell inner membrane. It carries out the reaction a quinone + succinate = fumarate + a quinol. Its pathway is carbohydrate metabolism; tricarboxylic acid cycle; fumarate from succinate (bacterial route): step 1/1. This Rickettsia felis (strain ATCC VR-1525 / URRWXCal2) (Rickettsia azadi) protein is Succinate dehydrogenase flavoprotein subunit (sdhA).